Reading from the N-terminus, the 187-residue chain is Oligoribonuclease (187 aa).

The region spanning 7 to 170 (LCWLDMEMTG…DDILESIEEM (164 aa)) is the Exonuclease domain. The active site involves Tyr128.

This sequence belongs to the oligoribonuclease family.

The protein localises to the cytoplasm. Functionally, 3'-to-5' exoribonuclease specific for small oligoribonucleotides. This chain is Oligoribonuclease, found in Neisseria meningitidis serogroup A / serotype 4A (strain DSM 15465 / Z2491).